The sequence spans 279 residues: MAVVTMKQLLDSGAHFGHQTRRWNPKMKRFIFTDRNGIYIIDLQQTLTYIDSAYEFVKETVAHGGSIMFVGTKKQAQESIAQEATRVGMPYVNQRWLGGMLTNFQTVHKRLQRMKELEAMEQTGGFEGRTKKEILMLTREKNKLERSLGGIRDMAKVPSAIWVVDTNKEHLAVAEARKLNIPIIAILDTNCDPDVVDYPIPGNDDAIRSAALLTKVIASAVAEGLQARAGAGADKAEAGQDGAAAEPLAEWEQELLAGATTAAPEAAAGEAAAAPEQSS.

The segment at 255–279 (LLAGATTAAPEAAAGEAAAAPEQSS) is disordered.

It belongs to the universal ribosomal protein uS2 family.

The polypeptide is Small ribosomal subunit protein uS2 (Mycolicibacterium gilvum (strain PYR-GCK) (Mycobacterium gilvum (strain PYR-GCK))).